The following is a 318-amino-acid chain: Chlorophyllase-2 (318 aa).

Positions glycine 136–glycine 140 match the GXSXG motif. Catalysis depends on serine 138, which acts as the Nucleophile. Catalysis depends on charge relay system residues aspartate 167 and histidine 244.

This sequence belongs to the AB hydrolase superfamily. Lipase family. In terms of tissue distribution, expressed in leaves, flowers and flower buds, but not in roots.

Its subcellular location is the cytoplasm. The protein localises to the cytosol. The catalysed reaction is a chlorophyll + H2O = a chlorophyllide + phytol + H(+). It catalyses the reaction chlorophyll a + H2O = phytol + chlorophyllide a + H(+). It participates in porphyrin-containing compound metabolism; chlorophyll degradation. Functionally, catalyzes the hydrolysis of ester bond in chlorophyll to yield chlorophyllide and phytol. Does not seem to be required for chlorophyll degradation during senescence. In Arabidopsis thaliana (Mouse-ear cress), this protein is Chlorophyllase-2.